A 61-amino-acid chain; its full sequence is Small ribosomal subunit protein uS14 (61 aa).

4 residues coordinate Zn(2+): C24, C27, C40, and C43.

It belongs to the universal ribosomal protein uS14 family. Zinc-binding uS14 subfamily. Part of the 30S ribosomal subunit. Contacts proteins S3 and S10. It depends on Zn(2+) as a cofactor.

Functionally, binds 16S rRNA, required for the assembly of 30S particles and may also be responsible for determining the conformation of the 16S rRNA at the A site. The protein is Small ribosomal subunit protein uS14 of Sulfurovum sp. (strain NBC37-1).